We begin with the raw amino-acid sequence, 674 residues long: MTLEEARKRVNELRDLIRYHNYRYYVLADPEISDAEYDRLLRELKELEERFPELKSPDSPTEQVGAKPLEATFRPIRHPTRMYSLDNAFNFDELKAFEERIGRALGREGPFAYTVEHKVDGLSVNLYYEDGVLVWGATRGDGEVGEEVTQNLLTIPTIPRRVKGVPERLEVRGEVYMPIEAFLRLNEELEEKGEKIFKNPRNAAAGSLRQKDPRITARRGLRATFYALGLGLEESGLKTQLDLLHWLREKGFPVEHGFARAEGAEGVERIYQGWLKERRSLPFEADGVVVKLDELSLWRELGYTARAPRFAIAYKFPAEEKETRLLQVVFQVGRTGRVTPVGILEPVFIEGSVVSRVTLHNESYIEELDVRIGDWVLVHKAGGVIPEVLRVLKEKRTGEERPIRWPETCPECGHRLVKEGKVHRCPNPLCPAKRFEAIRHYASRKAMDIGGLGEKLIEKLLEKGLVKDVADLYRLKKEDLLGLERMGEKSAQNLLRQIEESKGRGLERLLYALGLPGVGEVLARNLAAHFGTMDRLLEASLEELLQVEEVGELTARGIYETLQDPAFRDLVRRLKEAGVVMEAKERGEEALKGLTFVITGELSRPREEVKALLRRLGAKVTDSVSRKTSYLVVGENPGSKLEKARALGVPTLTEEELYRLIEERTGKPVETLAS.

Residues 34–38 (DAEYD), 84–85 (SL), and E116 contribute to the NAD(+) site. Catalysis depends on K118, which acts as the N6-AMP-lysine intermediate. NAD(+) is bound by residues R139, E174, K291, and K315. Positions 409, 412, 425, and 430 each coordinate Zn(2+). One can recognise a BRCT domain in the interval 586–674 (RGEEALKGLT…TGKPVETLAS (89 aa)).

This sequence belongs to the NAD-dependent DNA ligase family. LigA subfamily. Mg(2+) serves as cofactor. Requires Mn(2+) as cofactor.

The catalysed reaction is NAD(+) + (deoxyribonucleotide)n-3'-hydroxyl + 5'-phospho-(deoxyribonucleotide)m = (deoxyribonucleotide)n+m + AMP + beta-nicotinamide D-nucleotide.. Its function is as follows. DNA ligase that catalyzes the formation of phosphodiester linkages between 5'-phosphoryl and 3'-hydroxyl groups in double-stranded DNA using NAD as a coenzyme and as the energy source for the reaction. It is essential for DNA replication and repair of damaged DNA. The protein is DNA ligase of Thermus scotoductus.